A 118-amino-acid chain; its full sequence is Vitelline membrane protein Vm32E (118 aa).

The N-terminal stretch at 1 to 17 is a signal peptide; sequence MKIVALTLVAFVALAGA. Residues 36-75 form the VM domain; it reads GYPAPPCPTNYLFSCQPNLAPAPCAQEAQAPAYGSAGAYT.

This sequence belongs to the vitelline membrane family.

It localises to the secreted. Its function is as follows. Major early eggshell protein. The chain is Vitelline membrane protein Vm32E from Drosophila mauritiana (Fruit fly).